Reading from the N-terminus, the 142-residue chain is Transcription antitermination protein NusB (142 aa).

It belongs to the NusB family.

Involved in transcription antitermination. Required for transcription of ribosomal RNA (rRNA) genes. Binds specifically to the boxA antiterminator sequence of the ribosomal RNA (rrn) operons. The sequence is that of Transcription antitermination protein NusB from Actinobacillus succinogenes (strain ATCC 55618 / DSM 22257 / CCUG 43843 / 130Z).